A 330-amino-acid chain; its full sequence is Probable ADP,ATP carrier protein At5g56450 (330 aa).

Residues 1–10 show a composition bias toward acidic residues; the sequence is MCISKEDEED. The disordered stretch occupies residues 1–22; it reads MCISKEDEEDPSRNRRNQSPLS. 6 helical membrane-spanning segments follow: residues 27–61, 103–127, 137–171, 203–230, 236–270, and 300–325; these read LKHF…LQTQ, GSSV…RSIL, IFSG…RLAA, GLPA…EIFS, ELAL…IMMQ, and GALS…KRFL. Solcar repeat units lie at residues 28 to 126, 139 to 228, and 241 to 324; these read KHFQ…YRSI, SGAL…VKEI, and KRWG…VKRF. ADP contacts are provided by R108 and K120. R264 provides a ligand contact to ADP. A Substrate recognition motif is present at residues 264-269; the sequence is RRRIMM.

The protein belongs to the mitochondrial carrier (TC 2.A.29) family. In terms of assembly, monomer.

The protein resides in the membrane. It catalyses the reaction ADP(in) + ATP(out) = ADP(out) + ATP(in). Its function is as follows. ADP:ATP antiporter that catalyzes the exchange of ADP and ATP across the membrane. This is Probable ADP,ATP carrier protein At5g56450 from Arabidopsis thaliana (Mouse-ear cress).